A 218-amino-acid chain; its full sequence is Small ribosomal subunit protein uS3c (218 aa).

Residues 43 to 118 (IKNYVQKNMR…KLNIAITRIA (76 aa)) enclose the KH type-2 domain.

Belongs to the universal ribosomal protein uS3 family. In terms of assembly, part of the 30S ribosomal subunit.

Its subcellular location is the plastid. The protein resides in the chloroplast. In Buxus microphylla (Littleleaf boxwood), this protein is Small ribosomal subunit protein uS3c (rps3).